Consider the following 210-residue polypeptide: MTLSADLLLHAYANGVFPMAESRDDPEVFWVDPKRRGILPLDGFRISRSLAKRLRRDDYSISVNRDFAGVVQGCADREETWINGEIFDRYQELHHDGFAHSLEVWMDDALVGGVYGVSLGGAFFGESMFSRRRDASKIALAYLVDRLNAGGYILCDTQFITPHLASLGGREISRAAYRRRLAEALDQPGDFISPALPSPQVLLQRRTQTS.

This sequence belongs to the L/F-transferase family.

The protein localises to the cytoplasm. It carries out the reaction N-terminal L-lysyl-[protein] + L-leucyl-tRNA(Leu) = N-terminal L-leucyl-L-lysyl-[protein] + tRNA(Leu) + H(+). The enzyme catalyses N-terminal L-arginyl-[protein] + L-leucyl-tRNA(Leu) = N-terminal L-leucyl-L-arginyl-[protein] + tRNA(Leu) + H(+). The catalysed reaction is L-phenylalanyl-tRNA(Phe) + an N-terminal L-alpha-aminoacyl-[protein] = an N-terminal L-phenylalanyl-L-alpha-aminoacyl-[protein] + tRNA(Phe). In terms of biological role, functions in the N-end rule pathway of protein degradation where it conjugates Leu, Phe and, less efficiently, Met from aminoacyl-tRNAs to the N-termini of proteins containing an N-terminal arginine or lysine. The protein is Leucyl/phenylalanyl-tRNA--protein transferase of Ruegeria sp. (strain TM1040) (Silicibacter sp.).